Reading from the N-terminus, the 76-residue chain is DNA-directed RNA polymerase subunit omega (76 aa).

The protein belongs to the RNA polymerase subunit omega family. In cyanobacteria the RNAP catalytic core is composed of 2 alpha, 1 beta, 1 beta', 1 gamma and 1 omega subunit. When a sigma factor is associated with the core the holoenzyme is formed, which can initiate transcription.

The catalysed reaction is RNA(n) + a ribonucleoside 5'-triphosphate = RNA(n+1) + diphosphate. Promotes RNA polymerase assembly. Latches the N- and C-terminal regions of the beta' subunit thereby facilitating its interaction with the beta and alpha subunits. The polypeptide is DNA-directed RNA polymerase subunit omega (rpoZ) (Synechocystis sp. (strain ATCC 27184 / PCC 6803 / Kazusa)).